A 517-amino-acid polypeptide reads, in one-letter code: GMP synthase [glutamine-hydrolyzing] (517 aa).

One can recognise a Glutamine amidotransferase type-1 domain in the interval 9-199 (RILILDFGSQ…VLNVCGCEGL (191 aa)). Cys-86 acts as the Nucleophile in catalysis. Residues His-173 and Glu-175 contribute to the active site. One can recognise a GMPS ATP-PPase domain in the interval 200 to 392 (WTSASIIEDA…LGLPYNMLYR (193 aa)). Position 227-233 (227-233 (SGGVDSS)) interacts with ATP.

As to quaternary structure, homodimer.

The catalysed reaction is XMP + L-glutamine + ATP + H2O = GMP + L-glutamate + AMP + diphosphate + 2 H(+). It functions in the pathway purine metabolism; GMP biosynthesis; GMP from XMP (L-Gln route): step 1/1. Catalyzes the synthesis of GMP from XMP. This chain is GMP synthase [glutamine-hydrolyzing], found in Aliivibrio fischeri (strain ATCC 700601 / ES114) (Vibrio fischeri).